The sequence spans 498 residues: Neoxanthin synthase, chloroplastic (498 aa).

Residues 1–42 constitute a chloroplast transit peptide; sequence METLLKPFPSLLLSSPTPYRSIVQQNPSFLSPTTKKKSRKCL.

This sequence belongs to the lycopene cyclase family. Expressed exclusively in chromoplast-containing tissues of flowers and fruits. Expressed in preanthesis flowers.

It is found in the plastid. It localises to the chloroplast. It catalyses the reaction all-trans-violaxanthin = all-trans-neoxanthin. The enzyme catalyses a carotenoid psi-end group = a carotenoid beta-end derivative. The protein operates within carotenoid biosynthesis; neoxanthin biosynthesis. Its pathway is carotenoid biosynthesis; beta-carotene biosynthesis. Functionally, involved in the synthesis of neoxanthin, the last product of carotenoid synthesis and a precursor of abscisic acid. Involved in the beta-carotene biosynthesis. The sequence is that of Neoxanthin synthase, chloroplastic from Solanum lycopersicum (Tomato).